A 155-amino-acid polypeptide reads, in one-letter code: Ribosome maturation factor RimP (155 aa).

The protein belongs to the RimP family.

Its subcellular location is the cytoplasm. Required for maturation of 30S ribosomal subunits. This chain is Ribosome maturation factor RimP, found in Staphylococcus aureus (strain bovine RF122 / ET3-1).